A 118-amino-acid polypeptide reads, in one-letter code: Large ribosomal subunit protein bL20 (118 aa).

It belongs to the bacterial ribosomal protein bL20 family.

Binds directly to 23S ribosomal RNA and is necessary for the in vitro assembly process of the 50S ribosomal subunit. It is not involved in the protein synthesizing functions of that subunit. In Staphylococcus haemolyticus (strain JCSC1435), this protein is Large ribosomal subunit protein bL20.